A 156-amino-acid polypeptide reads, in one-letter code: Biotin carboxyl carrier protein of acetyl-CoA carboxylase (156 aa).

A Biotinyl-binding domain is found at 80-156 (GNVVRSPMVG…EFDQPLFTIV (77 aa)). At Lys-122 the chain carries N6-biotinyllysine.

In terms of assembly, homodimer.

The protein operates within lipid metabolism; fatty acid biosynthesis. This protein is a component of the acetyl coenzyme A carboxylase complex; first, biotin carboxylase catalyzes the carboxylation of the carrier protein and then the transcarboxylase transfers the carboxyl group to form malonyl-CoA. The polypeptide is Biotin carboxyl carrier protein of acetyl-CoA carboxylase (accB) (Pseudomonas aeruginosa (strain ATCC 15692 / DSM 22644 / CIP 104116 / JCM 14847 / LMG 12228 / 1C / PRS 101 / PAO1)).